Consider the following 471-residue polypeptide: Retinoic acid receptor RXR-beta-A (471 aa).

The tract at residues 1-34 (MGDSRDSRSPDSSSVSSPPSGQRSPPLAPSAAAM) is disordered. The tract at residues 1 to 102 (MGDSRDSRSP…HAVSSSDDVK (102 aa)) is modulating. Low complexity predominate over residues 10 to 25 (PDSSSVSSPPSGQRSP). The nuclear receptor DNA-binding region spans 122 to 197 (KRLCAICGDR…MGMKREVVQD (76 aa)). 2 NR C4-type zinc fingers span residues 125 to 145 (CAIC…CEGC) and 161 to 185 (CRDN…YQKC). Residues 196–216 (QDERQRSVQEERQRNKERDGE) show a composition bias toward basic and acidic residues. Residues 196 to 226 (QDERQRSVQEERQRNKERDGEVESSSAANEE) are disordered. Residues 198–221 (ERQRSVQEERQRNKERDGEVESSS) form a hinge region. One can recognise an NR LBD domain in the interval 224-467 (NEEMPVEKIL…TFLMEMLEAP (244 aa)).

It belongs to the nuclear hormone receptor family. NR2 subfamily. As to quaternary structure, homodimer. Heterodimer; with a rar molecule. Binds DNA preferentially as a rar/rxr heterodimer. Heterodimerizes with rarga. Shows uniform expression from the blastula to mid-gastrula stages. At 12 hours post-fertilization (hpf), expressed ubiquitously but more weakly. At 24 hpf, restricted to the ventral diencephalon, pharangeal endoderm and trunk and tail mesoderm; mesoderm expression is in medial cells of each somite along the dorsoventral axis, forming stripes. At 48 hpf, expressed in forebrain, eye, midbrain and anterior hindbrain.

Its subcellular location is the nucleus. Its function is as follows. Receptor for retinoic acid. Retinoic acid receptors bind as heterodimers to their target response elements in response to their ligands, all-trans or 9-cis retinoic acid, and regulate gene expression in various biological processes. The rar/rxr heterodimers bind to the retinoic acid response elements (RARE) composed of tandem 5'-AGGTCA-3' sites known as DR1-DR5. The high affinity ligand for rxrs is 9-cis retinoic acid. In Danio rerio (Zebrafish), this protein is Retinoic acid receptor RXR-beta-A (rxrba).